The sequence spans 256 residues: Enkurin (256 aa).

The interval 48–92 is disordered; that stretch reads TMGPAKLEVPSPKDFLKKHSKEKTLPPKKKFDRHEPKKPPVPLRT. The segment covering 61–72 has biased composition (basic and acidic residues); the sequence is DFLKKHSKEKTL. An SH3-binding motif is present at residues 83 to 89; it reads PKKPPVP. The 93-residue stretch at 160 to 252 folds into the Enkurin domain; that stretch reads KRNEEVKKAQ…VLEKHKIIYI (93 aa). The IQ domain maps to 176 to 187; sequence IQENLRKAAMKR.

In terms of assembly, microtubule inner protein component of sperm flagellar doublet microtubules. Binds calmodulin via its IQ domain. Interacts with TRPC1, TRPC2, TRPC5, but not TRPC3. Interacts with CFAP45.

Its subcellular location is the cytoplasm. It localises to the cytoskeleton. The protein localises to the cilium axoneme. The protein resides in the flagellum axoneme. Functionally, adapter that functions to localize a calcium-sensitive signal transduction machinery in sperm to a calcium-permeable ion channel. Microtubule inner protein (MIP) part of the dynein-decorated doublet microtubules (DMTs) in cilia axoneme, which is required for motile cilia beating. The sequence is that of Enkurin (ENKUR) from Sus scrofa (Pig).